The following is a 134-amino-acid chain: ATP synthase epsilon chain (134 aa).

The protein belongs to the ATPase epsilon chain family. In terms of assembly, F-type ATPases have 2 components, CF(1) - the catalytic core - and CF(0) - the membrane proton channel. CF(1) has five subunits: alpha(3), beta(3), gamma(1), delta(1), epsilon(1). CF(0) has three main subunits: a, b and c.

Its subcellular location is the cell membrane. Functionally, produces ATP from ADP in the presence of a proton gradient across the membrane. The sequence is that of ATP synthase epsilon chain from Clostridium botulinum (strain Alaska E43 / Type E3).